Consider the following 380-residue polypeptide: Carbonic anhydrase 2 (380 aa).

The first 20 residues, 1-20 (MARTGALLLAALALAGCAQA), serve as a signal peptide directing secretion. Residues 38 to 322 (DHWDHSLNGE…HHHRRLLHNH (285 aa)) enclose the Alpha-carbonic anhydrase domain. Cystine bridges form between Cys61-Cys264, Cys194-Cys198, and Cys296-Cys354. N-linked (GlcNAc...) asparagine glycosylation occurs at Asn101. His112 functions as the Proton acceptor in the catalytic mechanism. The N-linked (GlcNAc...) asparagine glycan is linked to Asn135. Zn(2+) is bound by residues His163, His165, and His182. 260–261 (TT) is a binding site for substrate. Residue Asn297 is glycosylated (N-linked (GlcNAc...) asparagine).

It belongs to the alpha-carbonic anhydrase family. As to quaternary structure, tetramer of two large and two small subunits linked by two disulfide bonds. Requires Zn(2+) as cofactor.

It localises to the periplasm. It catalyses the reaction hydrogencarbonate + H(+) = CO2 + H2O. In terms of biological role, reversible hydration of carbon dioxide. In Chlamydomonas reinhardtii (Chlamydomonas smithii), this protein is Carbonic anhydrase 2 (CAH2).